Here is a 393-residue protein sequence, read N- to C-terminus: Formate-dependent phosphoribosylglycinamide formyltransferase (393 aa).

N(1)-(5-phospho-beta-D-ribosyl)glycinamide is bound by residues 20–21 (EL) and Glu-80. ATP-binding positions include Arg-112, Lys-153, 158–163 (SSGKGQ), 193–196 (EAFI), and Glu-201. The ATP-grasp domain occupies 117–306 (RLAAEDLNLP…EFELHVRAVL (190 aa)). Residues Glu-265 and Glu-277 each coordinate Mg(2+). N(1)-(5-phospho-beta-D-ribosyl)glycinamide is bound by residues Asp-284, Lys-354, and 361–362 (RR).

This sequence belongs to the PurK/PurT family. Homodimer.

It catalyses the reaction N(1)-(5-phospho-beta-D-ribosyl)glycinamide + formate + ATP = N(2)-formyl-N(1)-(5-phospho-beta-D-ribosyl)glycinamide + ADP + phosphate + H(+). The protein operates within purine metabolism; IMP biosynthesis via de novo pathway; N(2)-formyl-N(1)-(5-phospho-D-ribosyl)glycinamide from N(1)-(5-phospho-D-ribosyl)glycinamide (formate route): step 1/1. Involved in the de novo purine biosynthesis. Catalyzes the transfer of formate to 5-phospho-ribosyl-glycinamide (GAR), producing 5-phospho-ribosyl-N-formylglycinamide (FGAR). Formate is provided by PurU via hydrolysis of 10-formyl-tetrahydrofolate. The protein is Formate-dependent phosphoribosylglycinamide formyltransferase of Syntrophotalea carbinolica (strain DSM 2380 / NBRC 103641 / GraBd1) (Pelobacter carbinolicus).